The chain runs to 225 residues: Phosphatidylserine decarboxylase proenzyme (225 aa).

The active-site Schiff-base intermediate with substrate; via pyruvic acid is serine 182. Serine 182 is subject to Pyruvic acid (Ser); by autocatalysis.

It belongs to the phosphatidylserine decarboxylase family. PSD-A subfamily. Heterodimer of a large membrane-associated beta subunit and a small pyruvoyl-containing alpha subunit. It depends on pyruvate as a cofactor. Post-translationally, is synthesized initially as an inactive proenzyme. Formation of the active enzyme involves a self-maturation process in which the active site pyruvoyl group is generated from an internal serine residue via an autocatalytic post-translational modification. Two non-identical subunits are generated from the proenzyme in this reaction, and the pyruvate is formed at the N-terminus of the alpha chain, which is derived from the carboxyl end of the proenzyme. The post-translation cleavage follows an unusual pathway, termed non-hydrolytic serinolysis, in which the side chain hydroxyl group of the serine supplies its oxygen atom to form the C-terminus of the beta chain, while the remainder of the serine residue undergoes an oxidative deamination to produce ammonia and the pyruvoyl prosthetic group on the alpha chain.

Its subcellular location is the cell membrane. It carries out the reaction a 1,2-diacyl-sn-glycero-3-phospho-L-serine + H(+) = a 1,2-diacyl-sn-glycero-3-phosphoethanolamine + CO2. Its pathway is phospholipid metabolism; phosphatidylethanolamine biosynthesis; phosphatidylethanolamine from CDP-diacylglycerol: step 2/2. Its function is as follows. Catalyzes the formation of phosphatidylethanolamine (PtdEtn) from phosphatidylserine (PtdSer). This chain is Phosphatidylserine decarboxylase proenzyme, found in Neorickettsia sennetsu (strain ATCC VR-367 / Miyayama) (Ehrlichia sennetsu).